A 370-amino-acid polypeptide reads, in one-letter code: UDP-N-acetylglucosamine--N-acetylmuramyl-(pentapeptide) pyrophosphoryl-undecaprenol N-acetylglucosamine transferase (370 aa).

Residues 10 to 12, asparagine 126, serine 200, isoleucine 255, and glutamine 300 contribute to the UDP-N-acetyl-alpha-D-glucosamine site; that span reads TGG.

This sequence belongs to the glycosyltransferase 28 family. MurG subfamily.

It localises to the cell membrane. It carries out the reaction Mur2Ac(oyl-L-Ala-gamma-D-Glu-L-Lys-D-Ala-D-Ala)-di-trans,octa-cis-undecaprenyl diphosphate + UDP-N-acetyl-alpha-D-glucosamine = beta-D-GlcNAc-(1-&gt;4)-Mur2Ac(oyl-L-Ala-gamma-D-Glu-L-Lys-D-Ala-D-Ala)-di-trans,octa-cis-undecaprenyl diphosphate + UDP + H(+). The protein operates within cell wall biogenesis; peptidoglycan biosynthesis. Its function is as follows. Cell wall formation. Catalyzes the transfer of a GlcNAc subunit on undecaprenyl-pyrophosphoryl-MurNAc-pentapeptide (lipid intermediate I) to form undecaprenyl-pyrophosphoryl-MurNAc-(pentapeptide)GlcNAc (lipid intermediate II). This chain is UDP-N-acetylglucosamine--N-acetylmuramyl-(pentapeptide) pyrophosphoryl-undecaprenol N-acetylglucosamine transferase, found in Lactobacillus johnsonii (strain CNCM I-12250 / La1 / NCC 533).